The chain runs to 545 residues: Glucose-6-phosphate isomerase (545 aa).

The active-site Proton donor is the Glu351. Catalysis depends on residues His382 and Lys510.

It belongs to the GPI family.

It is found in the cytoplasm. The enzyme catalyses alpha-D-glucose 6-phosphate = beta-D-fructose 6-phosphate. The protein operates within carbohydrate biosynthesis; gluconeogenesis. It participates in carbohydrate degradation; glycolysis; D-glyceraldehyde 3-phosphate and glycerone phosphate from D-glucose: step 2/4. In terms of biological role, catalyzes the reversible isomerization of glucose-6-phosphate to fructose-6-phosphate. The polypeptide is Glucose-6-phosphate isomerase (Shewanella frigidimarina (strain NCIMB 400)).